Here is a 635-residue protein sequence, read N- to C-terminus: Factor of DNA methylation 2 (635 aa).

Residues 289–471 adopt a coiled-coil conformation; the sequence is LDEKKNLHQA…ESMNSVLMTK (183 aa). Basic and acidic residues predominate over residues 350 to 365; that stretch reads ELERQKLDEDKRKSDA. The disordered stretch occupies residues 350–376; it reads ELERQKLDEDKRKSDAMNKSLQLASRE.

Forms a complex with IDN2 and FMD1/INDL1. As to expression, highly expressed in flowers and at lower levels in roots, leaves and stems.

In terms of biological role, forms a complex with IDN2 and FDM1/IDNL1 that is required for RNA-directed DNA methylation (RdDM) and that functions at a downstream step of the RdDM pathway. The sequence is that of Factor of DNA methylation 2 from Arabidopsis thaliana (Mouse-ear cress).